A 143-amino-acid polypeptide reads, in one-letter code: Small ribosomal subunit protein uS9A (143 aa).

The residue at position 2 (S2) is an N-acetylserine. Residue K30 forms a Glycyl lysine isopeptide (Lys-Gly) (interchain with G-Cter in ubiquitin) linkage. S34 bears the Phosphoserine mark. Residues K47 and K59 each participate in a glycyl lysine isopeptide (Lys-Gly) (interchain with G-Cter in ubiquitin) cross-link. Phosphoserine is present on S61. A Phosphothreonine modification is found at T70. Position 76 is a phosphoserine (S76). Residues R123–R143 form a disordered region. The span at A134–R143 shows a compositional bias: basic residues.

Belongs to the universal ribosomal protein uS9 family. In terms of assembly, component of the small ribosomal subunit (SSU). Mature yeast ribosomes consist of a small (40S) and a large (60S) subunit. The 40S small subunit contains 1 molecule of ribosomal RNA (18S rRNA) and 33 different proteins (encoded by 57 genes). The large 60S subunit contains 3 rRNA molecules (25S, 5.8S and 5S rRNA) and 46 different proteins (encoded by 81 genes).

It localises to the cytoplasm. Component of the ribosome, a large ribonucleoprotein complex responsible for the synthesis of proteins in the cell. The small ribosomal subunit (SSU) binds messenger RNAs (mRNAs) and translates the encoded message by selecting cognate aminoacyl-transfer RNA (tRNA) molecules. The large subunit (LSU) contains the ribosomal catalytic site termed the peptidyl transferase center (PTC), which catalyzes the formation of peptide bonds, thereby polymerizing the amino acids delivered by tRNAs into a polypeptide chain. The nascent polypeptides leave the ribosome through a tunnel in the LSU and interact with protein factors that function in enzymatic processing, targeting, and the membrane insertion of nascent chains at the exit of the ribosomal tunnel. In Saccharomyces cerevisiae (strain ATCC 204508 / S288c) (Baker's yeast), this protein is Small ribosomal subunit protein uS9A.